A 710-amino-acid polypeptide reads, in one-letter code: Solute carrier organic anion transporter family member 3A1 (710 aa).

Residue Met1 is modified to N-acetylmethionine. Residues 1 to 25 (MQAKKPGGSSGGGRSGELQGDEAQR) are disordered. The Cytoplasmic segment spans residues 1-40 (MQAKKPGGSSGGGRSGELQGDEAQRNKKKKKKVSCFSNIK). The helical transmembrane segment at 41–60 (IFLVSECALMLAQGTVGAYL) threads the bilayer. The Extracellular portion of the chain corresponds to 61–79 (VSVLTTLERRFNLQSADVG). Residues 80–100 (VIASSFEIGNLALILFVSYFG) traverse the membrane as a helical segment. At 101 to 106 (ARGHRP) the chain is on the cytoplasmic side. A helical membrane pass occupies residues 107 to 131 (RLIGCGGIVMALGALLSALPEFLTH). Residues 132–174 (QYKYEAGEIRWGAEGRDVCAANGSGGDQGPDPDLICRSRTATN) lie on the Extracellular side of the membrane. Asn153 carries an N-linked (GlcNAc...) asparagine glycan. A helical transmembrane segment spans residues 175-203 (MMYLLLIGAQVLLGIGATPVQPLGVSYID). Residues 204-222 (DHVRRKDSSLYIGILFTML) lie on the Cytoplasmic side of the membrane. Residues 223–243 (VFGPACGFILGSFCTKIYVDA) traverse the membrane as a helical segment. The Extracellular segment spans residues 244 to 261 (VFIDTSNLDITPDDPRWI). Residues 262–286 (GAWWGGFLLCGALLFFSSVLMFGFP) traverse the membrane as a helical segment. Over 287–344 (QSLPPHSDPALESEQAMLPEREYERPKPSNGVLRHPLEPDSSASCFQQLRVIPKVTKH) the chain is Cytoplasmic. Residues 345 to 366 (LLSNPVFTCIILAACMEIAVVA) form a helical membrane-spanning segment. Topologically, residues 367–386 (GFAAFLGKYLEQQFNLTTSS) are extracellular. Residue Asn381 is glycosylated (N-linked (GlcNAc...) asparagine). A helical transmembrane segment spans residues 387–410 (ANQLLGMTAIPCACLGIFLGGLLV). Residues 411 to 414 (KKLS) lie on the Cytoplasmic side of the membrane. A helical membrane pass occupies residues 415–438 (LSALGAIRMAMLVNLVSTACYVSF). The Extracellular portion of the chain corresponds to 439–539 (LFLGCDTGPV…PGCQEAFLTF (101 aa)). The N-linked (GlcNAc...) asparagine glycan is linked to Asn457. The Kazal-like domain maps to 465 to 513 (LDPYSSCNKNCECQTDSFTPVCGADGITYLSACFAGCNSTNLTGCACLM). Cystine bridges form between Cys471/Cys501, Cys477/Cys497, and Cys486/Cys511. N-linked (GlcNAc...) asparagine glycans are attached at residues Asn502, Asn505, and Asn519. A helical transmembrane segment spans residues 540-562 (LCVMCVCSMIGAMAQTPSVIILI). Topologically, residues 563–571 (RTVSPELKS) are cytoplasmic. The helical transmembrane segment at 572–597 (YALGVLFLLLRLLGFIPPPLIFGAGI) threads the bilayer. Residues 598-630 (DSTCLFWSTFCGEQGACALYDNVAYRYLYVSIA) lie on the Extracellular side of the membrane. The helical transmembrane segment at 631–648 (IALKSFAFLLYTTTWQCL) threads the bilayer. At 649-705 (RKNYKRYIKNHEGGLSTSEFFASTLTLDNLGRDPVPANQTHRTKFIYNLEDHEWCEN) the chain is on the cytoplasmic side.

Belongs to the organo anion transporter (TC 2.A.60) family.

The protein resides in the basolateral cell membrane. Its subcellular location is the apical cell membrane. The protein localises to the basal cell membrane. It catalyses the reaction L-thyroxine(out) = L-thyroxine(in). The catalysed reaction is prostaglandin E1(out) = prostaglandin E1(in). It carries out the reaction prostaglandin E2(out) = prostaglandin E2(in). The enzyme catalyses prostaglandin F2alpha(out) = prostaglandin F2alpha(in). It catalyses the reaction (5Z,8Z,11Z,14Z)-eicosatetraenoate(out) = (5Z,8Z,11Z,14Z)-eicosatetraenoate(in). The catalysed reaction is taurocholate(out) = taurocholate(in). It carries out the reaction glycocholate(out) = glycocholate(in). The enzyme catalyses estrone 3-sulfate(out) = estrone 3-sulfate(in). It catalyses the reaction argipressin(out) = argipressin(in). In terms of biological role, putative organic anion antiporter with apparent broad substrate specificity. Recognizes various substrates including thyroid hormone L-thyroxine, prostanoids such as prostaglandin E1 and E2, bile acids such as taurocholate, glycolate and glycochenodeoxycholate and peptide hormones such as L-arginine vasopressin, likely operating in a tissue-specific manner. The transport mechanism, its electrogenicity and potential tissue-specific counterions remain to be elucidated. This chain is Solute carrier organic anion transporter family member 3A1 (SLCO3A1), found in Bos taurus (Bovine).